The primary structure comprises 165 residues: CDP-archaeol synthase (165 aa).

A run of 3 helical transmembrane segments spans residues 4–24 (IVQL…AVLA), 78–98 (LLDA…GAFV), and 118–138 (FLLM…PLLL).

Belongs to the CDP-archaeol synthase family. The cofactor is Mg(2+).

Its subcellular location is the cell membrane. The enzyme catalyses 2,3-bis-O-(geranylgeranyl)-sn-glycerol 1-phosphate + CTP + H(+) = CDP-2,3-bis-O-(geranylgeranyl)-sn-glycerol + diphosphate. Its pathway is membrane lipid metabolism; glycerophospholipid metabolism. Its function is as follows. Catalyzes the formation of CDP-2,3-bis-(O-geranylgeranyl)-sn-glycerol (CDP-archaeol) from 2,3-bis-(O-geranylgeranyl)-sn-glycerol 1-phosphate (DGGGP) and CTP. This reaction is the third ether-bond-formation step in the biosynthesis of archaeal membrane lipids. This chain is CDP-archaeol synthase, found in Pyrobaculum calidifontis (strain DSM 21063 / JCM 11548 / VA1).